The primary structure comprises 160 residues: Baculoviral IAP repeat-containing protein 5.1-A (160 aa).

The stretch at 27–97 (RLATFADWPF…KRSANCGFLS (71 aa)) is one BIR repeat. Threonine 43 bears the Phosphothreonine; by CDK1 mark. Zn(2+) is bound by residues cysteine 66, cysteine 69, histidine 86, and cysteine 93.

The protein belongs to the IAP family. As to quaternary structure, component of the CPC at least composed of survivin/birc5, incenp, cdca8/borealin and/or cdca9/dasra-A, and aurkb/aurora-B. Interacts directly with incenp (via N-terminus), and may weakly interact with aurkb (via N-terminus) to stabilize the complex. Interacts with GTP-bound ran in both the S and M phases of the cell cycle. Also found in a complex with ubiquitin-mediated signaling proteins including at least usp9x/xFAM, nploc4/npl4 and ufd1. Ubiquitination is required for centrosome-targeting.

Its subcellular location is the cytoplasm. It localises to the nucleus. The protein localises to the chromosome. The protein resides in the centromere. It is found in the cytoskeleton. Its subcellular location is the spindle. In terms of biological role, component of the chromosomal passenger complex (CPC), a complex that acts as a key regulator of mitosis. The CPC complex has essential functions at the centromere in ensuring correct chromosome alignment and segregation and is required for chromatin-induced microtubule stabilization and spindle assembly. Stimulates the mitotic kinase activity of aurkb/aurora-B in the CPC. Does not appear to exhibit anti-apoptotic activity. The chain is Baculoviral IAP repeat-containing protein 5.1-A (birc5.1-a) from Xenopus laevis (African clawed frog).